Consider the following 353-residue polypeptide: Thrombopoietin (353 aa).

The N-terminal stretch at 1–21 (MELTELLLVVMLLLTARLTLS) is a signal peptide. Residue S22 is glycosylated (O-linked (GalNAc...) serine). 2 cysteine pairs are disulfide-bonded: C28–C172 and C50–C106. Residues T58, T131, T179, and T180 are each glycosylated (O-linked (GalNAc...) threonine). An O-linked (GalNAc...) serine glycan is attached at S184. 2 N-linked (GlcNAc...) (complex) asparagine glycosylation sites follow: N197 and N206. T213 carries an O-linked (GalNAc...) threonine glycan. N-linked (GlcNAc...) (complex) asparagine glycosylation is found at N234 and N255. The disordered stretch occupies residues 257–353 (TRGLFPGPSR…THSQNLSQEG (97 aa)). An O-linked (GalNAc...) serine glycan is attached at S265. A compositionally biased stretch (polar residues) spans 275–304 (SSGTSDTGSLPPNLQPGYSPSPTHPPTGQY). Over residues 324-335 (LPDPSAPTPTPT) the composition is skewed to pro residues. N-linked (GlcNAc...) asparagine glycosylation is found at N340 and N348. The span at 343–353 (YTHSQNLSQEG) shows a compositional bias: polar residues.

Belongs to the EPO/TPO family. In terms of assembly, interacts with MPL/TPOR.

It localises to the secreted. In terms of biological role, lineage-specific cytokine affecting the proliferation and maturation of megakaryocytes from their committed progenitor cells. It acts at a late stage of megakaryocyte development. It may be the major physiological regulator of circulating platelets. This Homo sapiens (Human) protein is Thrombopoietin (THPO).